The sequence spans 690 residues: Tripartite terminase subunit 3 (690 aa).

The short motif at 226-233 (IPRRHGKT) is the Walker A motif element. A Walker B motif motif is present at residues 321 to 326 (LLFVDE). Residue glutamate 326 is the For ATPase activity of the active site. Catalysis depends on for nuclease activity residues aspartate 481, glutamate 555, and aspartate 667.

Belongs to the herpesviridae TRM3 protein family. In terms of assembly, interacts with the terminase subunits TRM1 and TRM2. Interacts with portal protein.

The protein localises to the host nucleus. Its function is as follows. Component of the molecular motor that translocates viral genomic DNA in empty capsid during DNA packaging. Forms a tripartite terminase complex together with TRM1 and TRM2 in the host cytoplasm. Once the complex reaches the host nucleus, it interacts with the capsid portal vertex. This portal forms a ring in which genomic DNA is translocated into the capsid. TRM3 carries an RNase H-like nuclease activity that plays an important role for the cleavage of concatemeric viral DNA into unit length genomes. The chain is Tripartite terminase subunit 3 from Homo sapiens (Human).